The primary structure comprises 67 residues: Large ribosomal subunit protein bL35 (67 aa).

Belongs to the bacterial ribosomal protein bL35 family.

In Bartonella tribocorum (strain CIP 105476 / IBS 506), this protein is Large ribosomal subunit protein bL35.